The sequence spans 206 residues: Small ribosomal subunit protein uS4 (206 aa).

An S4 RNA-binding domain is found at S96–K156.

The protein belongs to the universal ribosomal protein uS4 family. As to quaternary structure, part of the 30S ribosomal subunit. Contacts protein S5. The interaction surface between S4 and S5 is involved in control of translational fidelity.

In terms of biological role, one of the primary rRNA binding proteins, it binds directly to 16S rRNA where it nucleates assembly of the body of the 30S subunit. Functionally, with S5 and S12 plays an important role in translational accuracy. In Buchnera aphidicola subsp. Cinara cedri (strain Cc), this protein is Small ribosomal subunit protein uS4.